The following is a 512-amino-acid chain: Sporulation-regulated protein 3 (512 aa).

A disordered region spans residues 31–68 (RQSSQGQYAVDSHPPKSPELKHRRQRSSSFVNGKCRNR). In terms of domain architecture, Septin-type G spans 106–365 (NGIDFTLMVA…EKCRSEMLRT (260 aa)). A G1 motif region spans residues 116–123 (GQSGLGKT). Residues 116 to 123 (GQSGLGKT), glycine 168, 247 to 255 (KSDLLTKEE), and arginine 315 contribute to the GTP site. A G3 motif region spans residues 165–168 (DTPG). The segment at 246–249 (AKSD) is G4 motif. Coiled coils occupy residues 376 to 406 (TKSV…LKNY) and 451 to 496 (RDWK…KSSN).

The protein belongs to the TRAFAC class TrmE-Era-EngA-EngB-Septin-like GTPase superfamily. Septin GTPase family. Interacts with other septin proteins such as SPR28 to form a ring at the bud neck.

Its subcellular location is the prospore membrane. The protein localises to the bud neck. Septins are GTPases involved in cytokinesis that assemble into filaments and form a ring at the cleavage site. May act by recruiting MYO1 and HOF1, a protein involved in septation, to the site of cleavage. Septins are also involved in cell morphogenesis, bud site selection, chitin deposition, cell cycle regulation, cell compartmentalization and spore wall formation. This chain is Sporulation-regulated protein 3 (SPR3), found in Saccharomyces cerevisiae (strain ATCC 204508 / S288c) (Baker's yeast).